A 359-amino-acid polypeptide reads, in one-letter code: Nicotinate-nucleotide--dimethylbenzimidazole phosphoribosyltransferase (359 aa).

The Proton acceptor role is filled by glutamate 318.

This sequence belongs to the CobT family. Homodimer.

It carries out the reaction 5,6-dimethylbenzimidazole + nicotinate beta-D-ribonucleotide = alpha-ribazole 5'-phosphate + nicotinate + H(+). The protein operates within nucleoside biosynthesis; alpha-ribazole biosynthesis; alpha-ribazole from 5,6-dimethylbenzimidazole: step 1/2. Catalyzes the synthesis of alpha-ribazole-5'-phosphate from nicotinate mononucleotide (NAMN) and 5,6-dimethylbenzimidazole (DMB). The protein is Nicotinate-nucleotide--dimethylbenzimidazole phosphoribosyltransferase of Shigella sonnei (strain Ss046).